A 552-amino-acid chain; its full sequence is L-ascorbate oxidase (552 aa).

Plastocyanin-like domains lie at 1–122 (SQIR…LIVD) and 134–300 (DGEI…NYLP). Cystine bridges form between Cys19–Cys201, Cys81–Cys538, and Cys180–Cys193. Cu cation is bound by residues His60 and His62. N-linked (GlcNAc...) asparagine glycosylation is present at Asn92. Residues His104 and His106 each contribute to the Cu cation site. 2 N-linked (GlcNAc...) asparagine glycosylation sites follow: Asn325 and Asn440. One can recognise a Plastocyanin-like 3 domain in the interval 344–523 (NRRIFLLNTQ…HMGMGVVFAE (180 aa)). Residues His445, His448, His450, His506, Cys507, His508, His512, and Met517 each contribute to the Cu cation site.

The protein belongs to the multicopper oxidase family. As to quaternary structure, dimer. Cu cation serves as cofactor.

It localises to the secreted. It carries out the reaction 4 L-ascorbate + O2 = 4 monodehydro-L-ascorbate radical + 2 H2O. May be involved in a redox system involving ascorbic acid. The sequence is that of L-ascorbate oxidase from Cucurbita pepo var. melopepo (Zucchini).